The following is a 299-amino-acid chain: ATP phosphoribosyltransferase (299 aa).

Belongs to the ATP phosphoribosyltransferase family. Long subfamily. Mg(2+) is required as a cofactor.

The protein localises to the cytoplasm. The enzyme catalyses 1-(5-phospho-beta-D-ribosyl)-ATP + diphosphate = 5-phospho-alpha-D-ribose 1-diphosphate + ATP. It participates in amino-acid biosynthesis; L-histidine biosynthesis; L-histidine from 5-phospho-alpha-D-ribose 1-diphosphate: step 1/9. Its activity is regulated as follows. Feedback inhibited by histidine. In terms of biological role, catalyzes the condensation of ATP and 5-phosphoribose 1-diphosphate to form N'-(5'-phosphoribosyl)-ATP (PR-ATP). Has a crucial role in the pathway because the rate of histidine biosynthesis seems to be controlled primarily by regulation of HisG enzymatic activity. The protein is ATP phosphoribosyltransferase of Shewanella sp. (strain ANA-3).